The following is a 164-amino-acid chain: Glutamate uptake regulatory protein (164 aa).

An HTH asnC-type domain is found at 5 to 66 (LDDFDIKILD…LLDPQKIGLG (62 aa)). The segment at residues 24-43 (MAELSEKTGLSANACWRRIR) is a DNA-binding region (H-T-H motif).

Its function is as follows. Represses the secondary, H(+)-coupled glutamate uptake system (Gluemp) genes. This is Glutamate uptake regulatory protein (grp) from Zymomonas mobilis subsp. mobilis (strain ATCC 10988 / DSM 424 / LMG 404 / NCIMB 8938 / NRRL B-806 / ZM1).